We begin with the raw amino-acid sequence, 494 residues long: Ankyrin repeat domain-containing protein 33B (494 aa).

The interval 1–80 (MVLLAGTGPE…SAESVPEGVP (80 aa)) is disordered. Residues 30–42 (VEEDPADYEEFED) show a composition bias toward acidic residues. 5 ANK repeats span residues 84-113 (PETA…SVEE), 120-150 (NGRT…DVNW), 154-183 (EGNT…GLDL), 189-218 (FGFT…DVHA), and 223-255 (RGMS…PEQF). Residues 349 to 494 (RAARGPQAQE…RRTAPWKKRT (146 aa)) are disordered. The span at 371-382 (TGQEDADSREGS) shows a compositional bias: basic and acidic residues. Ser-405 is modified (phosphoserine). 2 stretches are compositionally biased toward basic and acidic residues: residues 440 to 451 (RPARKGSTKDSG) and 459 to 487 (RYKE…ERRT). Positions 459–488 (RYKEAKEEKRKAEEAEKKRQAEAQKERRTA) form a coiled coil.

In Homo sapiens (Human), this protein is Ankyrin repeat domain-containing protein 33B (ANKRD33B).